Here is a 285-residue protein sequence, read N- to C-terminus: UPF0703 protein YcgQ (285 aa).

4 helical membrane-spanning segments follow: residues 4–24 (LLVLMGFTFFFYHLHASGNLT), 34–54 (LSFIAIFLLAILTAVQAYLFI), 89–109 (LIYVVFLFPLVSGIFFPIATL), and 210–230 (FVLRFGIIHCIADSGVYGMLV).

It belongs to the UPF0703 family.

Its subcellular location is the cell membrane. In Bacillus subtilis (strain 168), this protein is UPF0703 protein YcgQ (ycgQ).